Here is a 553-residue protein sequence, read N- to C-terminus: Heterochromatin protein 1-binding protein 3 (553 aa).

Ala-2 carries the N-acetylalanine modification. Ser-6 carries the phosphoserine modification. Disordered regions lie at residues 29 to 134 and 140 to 159; these read KLGE…KTIP and SASQ…SPRP. A Phosphothreonine modification is found at Thr-51. The segment covering 60 to 71 has biased composition (acidic residues); that stretch reads GEEEKPEPDISS. Lys-64 is covalently cross-linked (Glycyl lysine isopeptide (Lys-Gly) (interchain with G-Cter in SUMO2)). The residue at position 85 (Thr-85) is a Phosphothreonine. Positions 94-127 are enriched in basic and acidic residues; the sequence is EQPKGEPENEEKEENKSSEETKKDEKDQSKEKEK. Residue Lys-97 forms a Glycyl lysine isopeptide (Lys-Gly) (interchain with G-Cter in SUMO2) linkage. The span at 140–154 shows a compositional bias: polar residues; sequence SASQLARAQKQTPMA. 3 positions are modified to phosphoserine: Ser-142, Ser-155, and Ser-156. The region spanning 157-232 is the H15 1 domain; the sequence is PRPKMDAILT…GASGSFVVVQ (76 aa). Lys-190 carries the post-translational modification N6-acetyllysine. Positions 230–255 are disordered; the sequence is VVQKSRKTPQKSRNRKNRSSAVDPEP. Positions 233–247 are enriched in basic residues; it reads KSRKTPQKSRNRKNR. A phosphoserine mark is found at Ser-248 and Ser-249. The PxVxL motif signature appears at 255–259; it reads PQVKL. 2 H15 domains span residues 255 to 330 and 337 to 413; these read PQVK…QLKK and LGGS…QLCF. Lys-258 is covalently cross-linked (Glycyl lysine isopeptide (Lys-Gly) (interchain with G-Cter in SUMO2)). The segment at 422-553 is disordered; that stretch reads LFPKKEPDDS…TMKKSFRVKK (132 aa). Residues 430-450 show a composition bias toward acidic residues; that stretch reads DSRDEDEDEDESSEEDSEDEE. A phosphoserine mark is found at Ser-441, Ser-442, and Ser-446. The segment covering 489 to 510 has biased composition (basic residues); it reads GKARPLPKKAPPKAKTPAKKTR. The segment covering 517–527 has biased composition (low complexity); that stretch reads KKPSGGSSKKP. A compositionally biased stretch (basic residues) spans 543-553; that stretch reads STMKKSFRVKK.

Interacts (via PxVxL motif) with CBX5 (via Trp-174).

The protein resides in the nucleus. The protein localises to the chromosome. Its function is as follows. Component of heterochromatin that maintains heterochromatin integrity during G1/S progression and regulates the duration of G1 phase to critically influence cell proliferative capacity. Mediates chromatin condensation during hypoxia, leading to increased tumor cell viability, radio-resistance, chemo-resistance and self-renewal. The protein is Heterochromatin protein 1-binding protein 3 (HP1BP3) of Homo sapiens (Human).